A 343-amino-acid polypeptide reads, in one-letter code: MTIAATEALTRCIEHREIFHDEMLHLMRLLMRGELSPQIASALLMGLRVKKETVGEITAAAQVMREFATPVVTPNPQDLLDMCGTGGDGSHTFNISTTAMFVAAAAGVPIAKHGNRSASSSSGSADVLEALGANLQLTPEEVAECVAATGIGFMFAPAHHGAMKNVAAVRKELGVRTIFNILGPLTNPAGAANQLMGVFHPDLVGIQVRVLERLGSRHVLVVHGKDGMDEASLGAATMVGELKDGVVREYEIHPEDYGLSMMSNRGIKVSNREESRALVIEALDNVDGVARDIVALNAGLAIYAGNKADSIPEALALAFETISNGSARAKLEEFCAYTRKFQK.

5-phospho-alpha-D-ribose 1-diphosphate is bound by residues Gly-84, 87 to 88 (GD), Thr-92, 94 to 97 (NIST), 112 to 120 (KHGNRSASS), and Ser-124. Gly-84 is an anthranilate binding site. Position 96 (Ser-96) interacts with Mg(2+). Asn-115 contributes to the anthranilate binding site. Arg-170 contributes to the anthranilate binding site. Residues Asp-229 and Glu-230 each contribute to the Mg(2+) site.

This sequence belongs to the anthranilate phosphoribosyltransferase family. Homodimer. The cofactor is Mg(2+).

It carries out the reaction N-(5-phospho-beta-D-ribosyl)anthranilate + diphosphate = 5-phospho-alpha-D-ribose 1-diphosphate + anthranilate. It participates in amino-acid biosynthesis; L-tryptophan biosynthesis; L-tryptophan from chorismate: step 2/5. Its function is as follows. Catalyzes the transfer of the phosphoribosyl group of 5-phosphorylribose-1-pyrophosphate (PRPP) to anthranilate to yield N-(5'-phosphoribosyl)-anthranilate (PRA). The protein is Anthranilate phosphoribosyltransferase of Bordetella pertussis (strain Tohama I / ATCC BAA-589 / NCTC 13251).